The sequence spans 177 residues: Nucleoside triphosphate/diphosphate phosphatase (177 aa).

The Proton donor role is filled by arginine 23. Mg(2+) is bound by residues asparagine 87, aspartate 103, aspartate 105, aspartate 107, aspartate 120, and glutamate 123.

The protein belongs to the Ntdp family. Requires Mg(2+) as cofactor.

It catalyses the reaction a ribonucleoside 5'-triphosphate + H2O = a ribonucleoside 5'-diphosphate + phosphate + H(+). It carries out the reaction a ribonucleoside 5'-diphosphate + H2O = a ribonucleoside 5'-phosphate + phosphate + H(+). Functionally, has nucleoside phosphatase activity towards nucleoside triphosphates and nucleoside diphosphates. This is Nucleoside triphosphate/diphosphate phosphatase from Streptococcus equi subsp. zooepidemicus (strain MGCS10565).